A 323-amino-acid chain; its full sequence is uncharacterized protein (323 aa).

This is an uncharacterized protein from Treponema pallidum (strain Nichols).